A 1019-amino-acid chain; its full sequence is Phosphatidylinositol 3,4,5-trisphosphate 5-phosphatase 1 (1019 aa).

The 97-residue stretch at 5–101 (WYHGNITRSK…GLVTHLQYPI (97 aa)) folds into the SH2 domain. Positions 103–116 (KEEEGPEEPDEEQE) are enriched in acidic residues. 2 disordered regions span residues 103-133 (KEEEGPEEPDEEQEPAPPNVPPRNFAFTPPS) and 909-1019 (ETQN…PPTA). The SH3-binding 1 signature appears at 120 to 125 (PNVPPR). Polar residues-rich tracts occupy residues 909–931 (ETQNSMDHTASVAAISSQAKQSP) and 958–980 (PITSPPRTTLSTQKFSHSNTNRT). The SH3-binding 2 signature appears at 966–971 (TLSTQK). Residues 1004–1007 (NPLY) carry the NPXY motif motif. Position 1007 is a phosphotyrosine (Tyr-1007). The segment covering 1010–1019 (VNNTLYPPTA) has biased composition (polar residues).

It belongs to the inositol 1,4,5-trisphosphate 5-phosphatase family. Tyrosine phosphorylated by the members of the SRC family after exposure to a diverse array of extracellular stimuli.

Its subcellular location is the cytoplasm. The protein resides in the cell membrane. The protein localises to the membrane raft. It localises to the cytoskeleton. It carries out the reaction a 1,2-diacyl-sn-glycero-3-phospho-(1D-myo-inositol-3,4,5-trisphosphate) + H2O = a 1,2-diacyl-sn-glycero-3-phospho-(1D-myo-inositol-3,4-bisphosphate) + phosphate. The enzyme catalyses 1D-myo-inositol 1,3,4,5-tetrakisphosphate + H2O = 1D-myo-inositol 1,3,4-trisphosphate + phosphate. The catalysed reaction is a 1,2-diacyl-sn-glycero-3-phospho-(1D-myo-inositol-4,5-bisphosphate) + H2O = a 1,2-diacyl-sn-glycero-3-phospho-(1D-myo-inositol 4-phosphate) + phosphate. Its function is as follows. Phosphatidylinositol (PtdIns) phosphatase that specifically hydrolyzes the 5-phosphate of phosphatidylinositol-3,4,5-trisphosphate (PtdIns(3,4,5)P3) to produce PtdIns(3,4)P2, thereby negatively regulating the PI3K (phosphoinositide 3-kinase) pathways. Able also to hydrolyzes the 5-phosphate of phosphatidylinositol-4,5-bisphosphate (PtdIns(4,5)P3) and inositol 1,3,4,5-tetrakisphosphate. Acts as a negative regulator of B-cell antigen receptor signaling. Mediates signaling from the FC-gamma-RIIB receptor (FCGR2B), playing a central role in terminating signal transduction from activating immune/hematopoietic cell receptor systems. Acts as a negative regulator of myeloid cell proliferation/survival and chemotaxis, mast cell degranulation, immune cells homeostasis, integrin alpha-IIb/beta-3 signaling in platelets and JNK signaling in B-cells. The protein is Phosphatidylinositol 3,4,5-trisphosphate 5-phosphatase 1 (inpp5d) of Xenopus laevis (African clawed frog).